The chain runs to 213 residues: Uridine kinase (213 aa).

13–20 serves as a coordination point for ATP; the sequence is GASASGKS.

It belongs to the uridine kinase family.

It localises to the cytoplasm. The enzyme catalyses uridine + ATP = UMP + ADP + H(+). It carries out the reaction cytidine + ATP = CMP + ADP + H(+). It functions in the pathway pyrimidine metabolism; CTP biosynthesis via salvage pathway; CTP from cytidine: step 1/3. It participates in pyrimidine metabolism; UMP biosynthesis via salvage pathway; UMP from uridine: step 1/1. In Haemophilus influenzae (strain PittGG), this protein is Uridine kinase.